We begin with the raw amino-acid sequence, 234 residues long: 7-cyano-7-deazaguanine synthase (234 aa).

Leu7–Met17 provides a ligand contact to ATP. Zn(2+) is bound by residues Cys197, Cys208, Cys211, and Cys214.

The protein belongs to the QueC family. Zn(2+) is required as a cofactor.

The enzyme catalyses 7-carboxy-7-deazaguanine + NH4(+) + ATP = 7-cyano-7-deazaguanine + ADP + phosphate + H2O + H(+). The protein operates within purine metabolism; 7-cyano-7-deazaguanine biosynthesis. Functionally, catalyzes the ATP-dependent conversion of 7-carboxy-7-deazaguanine (CDG) to 7-cyano-7-deazaguanine (preQ(0)). The sequence is that of 7-cyano-7-deazaguanine synthase from Methanococcus aeolicus (strain ATCC BAA-1280 / DSM 17508 / OCM 812 / Nankai-3).